We begin with the raw amino-acid sequence, 236 residues long: Snake venom serine protease pallase (236 aa).

A Peptidase S1 domain is found at 1-227; the sequence is VIGGDECNIN…HLDWIENIIA (227 aa). Intrachain disulfides connect C7–C139, C26–C42, C74–C234, C118–C188, C150–C167, and C178–C203. Catalysis depends on charge relay system residues H41 and D86. Residue S182 is the Charge relay system of the active site.

The protein belongs to the peptidase S1 family. Snake venom subfamily. In terms of assembly, monomer. Expressed by the venom gland.

The protein localises to the secreted. In terms of biological role, snake venom serine protease that may act in the hemostasis system of the prey. This Gloydius halys (Chinese water mocassin) protein is Snake venom serine protease pallase.